The primary structure comprises 753 residues: LON peptidase N-terminal domain and RING finger protein 3 (753 aa).

The segment at 17 to 57 is disordered; sequence GSNNLELAEPEEPGTSAAAGQSAAHPEEVTPEGSQALGAQE. Residues 72-105 form a TPR 1 repeat; sequence CKVLLTQADALASEGHLREALEVYRQLSERQQLV. Residues 159-197 form an RING-type 1 zinc finger; the sequence is CKKCHGFLSDPVSLWCGHTFCKLCLERGRAADRRCALCG. TPR repeat units lie at residues 244–277, 279–311, and 313–345; these read ASQLRHEGNRLFREHQVEAALLKYNEAVRLAPND, LLYSNRSQIYFTLESHEDALHDAEIACKLRPMG, and KAHFRKAQALATLGKVKEALKEFLYCVSLDGKN. Residues 351–450 are disordered; sequence EAQRENLELP…QGAKPDLSNP (100 aa). Positions 363 to 382 are enriched in low complexity; that stretch reads SNQEGAAAAEESSSLANSAQ. Residues 386–413 show a composition bias toward basic and acidic residues; the sequence is SSKEDRKKDQEGEDRDAASVRTGKCQEK. The segment at 461-499 adopts an RING-type 2 zinc-finger fold; sequence CSLCMRLFYEPVTTPCGHTFCLKCLERCLDHNAKCPLCK. Residues 540 to 749 form the Lon N-terminal domain; it reads MEELSNLNKN…GIRRILAFIS (210 aa).

This Mus musculus (Mouse) protein is LON peptidase N-terminal domain and RING finger protein 3 (Lonrf3).